The sequence spans 935 residues: MSDYKDTLNLPKTSFSMKGNLANKEPMILNKWEKQGIYKKIREHFAGREKFVLHDGPPYANGSIHVGHAVNKILKDIIIKSKTLSGYDAPFTPTWDCHGLPIELQVEKKHGKAGQSISEDDFRKECRKYAKKQVEIQKKDFKRLGVLGDWEQPYLTMNFDYEANMIRTLAKIIENGHLSKGFKPVHWCTDCGSALAEAEVEYADKVSPAIDVKFKIKDKDKLAQAFGLDSLNHDAFAIIWTTTPWTLPANQAIAVNNQLNYSLIKIEDFYIILAENLVEQTLKRYAIENAQIIATTTGNKLTGIIAEHPFYSRHVPILHGDHVTDDSGTGLVHTAPTHGVDDFTLGKEHNLSMEIFVKGNGCYSENTKLFAGEFIFKASDRIIELLGEKKRLMNSDKIKHSYPHCWRHKTPLMFRATPQWFISMEKQGLRDKALQTIKETSWAPSWGQARIEGMVKDRPDWCISRQRTWGVPLPLFIHKETEELHPNTIEILHKVAEKIEKDGIEAWFNADDCEFITETAQYKSVKDTLDVWFDSGSSSMCILDLDKRLSYPADLYLEGSDQHRGWFQTSLLVAMSAKGSQPYKEVFTHGFVVDEHGRKMSKSLGNVTSPQDIYNTLGADILRLWTASTDYKSEMAVSDQILKRTADTYRRLRNTARFLLSNLDGFNPVTDIIEFDKLVKLDQWAIAKTKEFQDKIIEAYDKYQTHTVAQLIHHFCSIEMGSFYLDIIKDRQYTAKTDGHPRKSAQTAIYHIVHALVRWMAPILSFTADEIWDATPKTTDLPIQLCEWYTGLKSFDQDAELDLEYWAKIQEIRSEVNRVLEIKRNEDVIKASLEAEITIYADKYNYKLLEKLGNELRFLLISSKADLKVIEESTSSSIAANILGLLIEITKIEEPKCERCWHRSSTVGDNPQYKDICSRCVENITTEAGESREFA.

Positions 58 to 68 (PYANGSIHVGH) match the 'HIGH' region motif. Position 558 (E558) interacts with L-isoleucyl-5'-AMP. A 'KMSKS' region motif is present at residues 599–603 (KMSKS). ATP is bound at residue K602. Zn(2+) contacts are provided by C897, C900, C917, and C920.

The protein belongs to the class-I aminoacyl-tRNA synthetase family. IleS type 1 subfamily. In terms of assembly, monomer. Zn(2+) is required as a cofactor.

Its subcellular location is the cytoplasm. It carries out the reaction tRNA(Ile) + L-isoleucine + ATP = L-isoleucyl-tRNA(Ile) + AMP + diphosphate. Its function is as follows. Catalyzes the attachment of isoleucine to tRNA(Ile). As IleRS can inadvertently accommodate and process structurally similar amino acids such as valine, to avoid such errors it has two additional distinct tRNA(Ile)-dependent editing activities. One activity is designated as 'pretransfer' editing and involves the hydrolysis of activated Val-AMP. The other activity is designated 'posttransfer' editing and involves deacylation of mischarged Val-tRNA(Ile). The chain is Isoleucine--tRNA ligase from Francisella tularensis subsp. holarctica (strain OSU18).